Here is a 208-residue protein sequence, read N- to C-terminus: MTRRAAVKAPRAGAAARRGSVARRTKETDVAVDLRLEPGEASISTGLPFFDHMLDQISRHGGMALTVRAEGDLQVDAHHTVEDVGIGLGEALRQALEDKAGLARYGHAVVPLDEALVEAVVDLSGRPHLTFNAKLPSGKKFIGGYDVDLTQDFLQALVNHARICVHVNVRYGRNLHHVVEAIFKATARALRAATAREGTALPSTKGTL.

Residues 1–22 form a disordered region; that stretch reads MTRRAAVKAPRAGAAARRGSVA. The span at 7 to 19 shows a compositional bias: low complexity; the sequence is VKAPRAGAAARRG.

The protein belongs to the imidazoleglycerol-phosphate dehydratase family.

The protein resides in the cytoplasm. The enzyme catalyses D-erythro-1-(imidazol-4-yl)glycerol 3-phosphate = 3-(imidazol-4-yl)-2-oxopropyl phosphate + H2O. The protein operates within amino-acid biosynthesis; L-histidine biosynthesis; L-histidine from 5-phospho-alpha-D-ribose 1-diphosphate: step 6/9. The protein is Imidazoleglycerol-phosphate dehydratase of Anaeromyxobacter dehalogenans (strain 2CP-C).